We begin with the raw amino-acid sequence, 212 residues long: MRVRNKPWAPELIEAHPEKIVEKGQAFKGQWNQRFEKEQPIFIEVGTGKGQFIINMAKKYPQYNFIGIEIQKTVIAIALKNALEEEIPNLQFLYADGAELTDYFEDGEVSKVFLNFSDPWPKTRHEKRRLTFKTFLKVYEQILVKNGEVEFKTDNQGLFEYSLYSLNNYGMTFEGVWLDLHNSEENEDNVETEYEHKFSAKGQPIYKLKAHF.

Residues Glu44, Glu69, Asp96, and Asp118 each contribute to the S-adenosyl-L-methionine site. Asp118 is an active-site residue. Lys122 is a substrate binding site. Residues 124–129 (RHEKRR) are interaction with RNA. Substrate-binding positions include Asp154 and 192-195 (TEYE).

The protein belongs to the class I-like SAM-binding methyltransferase superfamily. TrmB family.

It carries out the reaction guanosine(46) in tRNA + S-adenosyl-L-methionine = N(7)-methylguanosine(46) in tRNA + S-adenosyl-L-homocysteine. The protein operates within tRNA modification; N(7)-methylguanine-tRNA biosynthesis. In terms of biological role, catalyzes the formation of N(7)-methylguanine at position 46 (m7G46) in tRNA. The polypeptide is tRNA (guanine-N(7)-)-methyltransferase (Pediococcus pentosaceus (strain ATCC 25745 / CCUG 21536 / LMG 10740 / 183-1w)).